A 512-amino-acid chain; its full sequence is Cytochrome P450 monooxygenase astD (512 aa).

Residues 19-39 form a helical membrane-spanning segment; that stretch reads MGISILVMLSTFLALGTIFVY. N-linked (GlcNAc...) asparagine glycosylation is found at N191 and N413. C449 provides a ligand contact to heme.

Belongs to the cytochrome P450 family. Requires heme as cofactor.

The protein localises to the membrane. It functions in the pathway secondary metabolite biosynthesis; terpenoid biosynthesis. Cytochrome P450 monooxygenase; part of the gene cluster that mediates the biosynthesis of astellolides, drimane-type sesquiterpene esters that show antimicrobial, anti-inflammatory, and anti-tumor activities. The first step in astellolide biosynthesis is performed by the sesquiterpene cyclase astC that catalyzes the formation of drimanyl pyrophosphate from farnesyl pyrophosphate. Drimanyl pyrophosphate is then dephosphorylated by the sesquiterpene phosphatase astI to produce drimanyl monophosphate which is further dephosphorylated to drim-8-ene-11-ol by atsK. Drim-8-ene-11-ol is converted to confertifolin, probably by the cytochrome P450 monooxygenase astD and/or the dehydrogenase astE. The cytochrome P450 monooxygenases astB, astF and astJ then hydroxylate confertifolin at C6, C14, or C15 to form trihydroxy confertifolin. The nonribosomal peptide synthetase astA catalyzes ester bond formation between trihydroxy contifolin and benzoic acid (BA) or 4-hydroxy benzoic acid (4HBA), leading to the formation of dideacetyl astellolides A and B, respectively. Finally, the O-acetyltransferase astG converts dideacetyl astellolides A and B into deacetyl astellolides A and B. The protein is Cytochrome P450 monooxygenase astD of Aspergillus oryzae (strain ATCC 42149 / RIB 40) (Yellow koji mold).